A 952-amino-acid chain; its full sequence is MSNAKSYKDTVNLPQTDFDMRANASKREPEIQKFWQDEQIYEKLAQNNPKELFILHDGPPYANGSLHIGHALNKILKDIINKYKLLQGYKVRYVPGWDCHGLPIELKVLQSLKSSEKEGLTPVKLRQKAHDFALQTQKEQCEGFKRYGVWGDWENPYLTLQPEYEAAQIAVFGKMALKGYIYRGLKPVHWSPSSQTALAEAELEYPEGHTSRSVYVAFPITSVSTPVLRPFLPNLSVAIWTTTPWTLPGNLAVALNPELNYSVVETSESNYLIVATDLVEKLADTFNRTLTIKATVKGLELEHTKYRHPLFDRESAILIGGDYVTTDSGTGLVHTAPGHGQEDYIVGQRYGLPILSPVDDKGNFTAEAGQFAGLNVLKDANEAIILALTEKGALLKEEAYQHKYPYDWRTKKPTIFRATEQWFASVEGFRELALEAIDSVRWIPATGKNRITSMVSERSDWCISRQRSWGVPIPVFYDEETNEPLLTEETINHVQAIFGVKGSNAWWELSVEELLPPSYRNNGRSYRKGMDTMDVWFDSGSSWNAVANARPELSYPADMYLEGSDQHRGWFQSSLLTSVAANGIAPYKTVLTHGFVLDEQGRKMSKSLGNVIDPNVIINGGKDQKKEPAYGVDVIRLWVSSVDYTNDVNIGQNILKQLVDIRNKIRNTARFLLGSLNDFDPVKDAVAYEDLPEIDRYMLHRISEVFTEVTAAFESFQFFRFFQTVQNFCVVDLSNFYIDIAKDRLYISDPNSFRRRSCQTVYAIALENLAKAIAPVLSHLAEDIWQFLPYKTPYLSVFESGWLNIDPAWNNRELADKWAKFRQLRTEVNKVMETARNDKAIGASLEAKVLLYVPDESLQQELELFNNCDSLTGNKVDELRYLFLSSQVELVSDISAIQTAEYKGESDFVSVGIVKAEGEKCDRCWNYSTQVGKFADDPTICERCNAALKGEF.

The 'HIGH' region signature appears at 60–70 (PYANGSLHIGH). E562 lines the L-isoleucyl-5'-AMP pocket. The 'KMSKS' region signature appears at 603–607 (KMSKS). Position 606 (K606) interacts with ATP. Zn(2+) contacts are provided by C921, C924, C941, and C944.

The protein belongs to the class-I aminoacyl-tRNA synthetase family. IleS type 1 subfamily. As to quaternary structure, monomer. It depends on Zn(2+) as a cofactor.

It is found in the cytoplasm. It catalyses the reaction tRNA(Ile) + L-isoleucine + ATP = L-isoleucyl-tRNA(Ile) + AMP + diphosphate. Catalyzes the attachment of isoleucine to tRNA(Ile). As IleRS can inadvertently accommodate and process structurally similar amino acids such as valine, to avoid such errors it has two additional distinct tRNA(Ile)-dependent editing activities. One activity is designated as 'pretransfer' editing and involves the hydrolysis of activated Val-AMP. The other activity is designated 'posttransfer' editing and involves deacylation of mischarged Val-tRNA(Ile). In Microcystis aeruginosa (strain NIES-843 / IAM M-2473), this protein is Isoleucine--tRNA ligase.